An 87-amino-acid polypeptide reads, in one-letter code: MPKKPAQSDSTEQSVSFESSLSELESIVTRLESGELPLEDALNEFERGVQLARQGQQKLQQAEQRVQILLNDSADDAALTPFTPDAE.

This sequence belongs to the XseB family. Heterooligomer composed of large and small subunits.

The protein localises to the cytoplasm. The enzyme catalyses Exonucleolytic cleavage in either 5'- to 3'- or 3'- to 5'-direction to yield nucleoside 5'-phosphates.. In terms of biological role, bidirectionally degrades single-stranded DNA into large acid-insoluble oligonucleotides, which are then degraded further into small acid-soluble oligonucleotides. The sequence is that of Exodeoxyribonuclease 7 small subunit from Serratia proteamaculans (strain 568).